The sequence spans 144 residues: 3-hydroxyacyl-[acyl-carrier-protein] dehydratase FabZ (144 aa).

The active site involves H49.

Belongs to the thioester dehydratase family. FabZ subfamily.

It is found in the cytoplasm. It catalyses the reaction a (3R)-hydroxyacyl-[ACP] = a (2E)-enoyl-[ACP] + H2O. Functionally, involved in unsaturated fatty acids biosynthesis. Catalyzes the dehydration of short chain beta-hydroxyacyl-ACPs and long chain saturated and unsaturated beta-hydroxyacyl-ACPs. The polypeptide is 3-hydroxyacyl-[acyl-carrier-protein] dehydratase FabZ (Clostridium kluyveri (strain NBRC 12016)).